We begin with the raw amino-acid sequence, 205 residues long: Holliday junction branch migration complex subunit RuvA (205 aa).

The tract at residues 1-64 (MIGKLKGLID…EDQIKLFGFR (64 aa)) is domain I. The interval 65–143 (SDLEREWFRL…GFASVDPAVA (79 aa)) is domain II. A flexible linker region spans residues 144–153 (HLSGAIEERS). Positions 153–205 (SAPRPVADAISALVNLGYGQPQAAAAIAAAARSAGDAAQTAQLIKLGLKELSK) are domain III.

The protein belongs to the RuvA family. Homotetramer. Forms an RuvA(8)-RuvB(12)-Holliday junction (HJ) complex. HJ DNA is sandwiched between 2 RuvA tetramers; dsDNA enters through RuvA and exits via RuvB. An RuvB hexamer assembles on each DNA strand where it exits the tetramer. Each RuvB hexamer is contacted by two RuvA subunits (via domain III) on 2 adjacent RuvB subunits; this complex drives branch migration. In the full resolvosome a probable DNA-RuvA(4)-RuvB(12)-RuvC(2) complex forms which resolves the HJ.

The protein resides in the cytoplasm. In terms of biological role, the RuvA-RuvB-RuvC complex processes Holliday junction (HJ) DNA during genetic recombination and DNA repair, while the RuvA-RuvB complex plays an important role in the rescue of blocked DNA replication forks via replication fork reversal (RFR). RuvA specifically binds to HJ cruciform DNA, conferring on it an open structure. The RuvB hexamer acts as an ATP-dependent pump, pulling dsDNA into and through the RuvAB complex. HJ branch migration allows RuvC to scan DNA until it finds its consensus sequence, where it cleaves and resolves the cruciform DNA. In Rhodopseudomonas palustris (strain BisA53), this protein is Holliday junction branch migration complex subunit RuvA.